We begin with the raw amino-acid sequence, 642 residues long: 1,4-alpha-glucan branching enzyme GlgB (642 aa).

D304 acts as the Nucleophile in catalysis. E355 functions as the Proton donor in the catalytic mechanism.

This sequence belongs to the glycosyl hydrolase 13 family. GlgB subfamily. As to quaternary structure, monomer.

The enzyme catalyses Transfers a segment of a (1-&gt;4)-alpha-D-glucan chain to a primary hydroxy group in a similar glucan chain.. The protein operates within glycan biosynthesis; glycogen biosynthesis. Its function is as follows. Catalyzes the formation of the alpha-1,6-glucosidic linkages in glycogen by scission of a 1,4-alpha-linked oligosaccharide from growing alpha-1,4-glucan chains and the subsequent attachment of the oligosaccharide to the alpha-1,6 position. This Streptococcus pneumoniae serotype 2 (strain D39 / NCTC 7466) protein is 1,4-alpha-glucan branching enzyme GlgB.